Reading from the N-terminus, the 122-residue chain is Large ribosomal subunit protein bL12 (122 aa).

The protein belongs to the bacterial ribosomal protein bL12 family. In terms of assembly, homodimer. Part of the ribosomal stalk of the 50S ribosomal subunit. Forms a multimeric L10(L12)X complex, where L10 forms an elongated spine to which 2 to 4 L12 dimers bind in a sequential fashion. Binds GTP-bound translation factors.

Functionally, forms part of the ribosomal stalk which helps the ribosome interact with GTP-bound translation factors. Is thus essential for accurate translation. The chain is Large ribosomal subunit protein bL12 from Stenotrophomonas maltophilia (strain R551-3).